A 393-amino-acid polypeptide reads, in one-letter code: NAD(P)H-quinone oxidoreductase subunit H, chloroplastic (393 aa).

This sequence belongs to the complex I 49 kDa subunit family. In terms of assembly, NDH is composed of at least 16 different subunits, 5 of which are encoded in the nucleus.

It localises to the plastid. The protein localises to the chloroplast thylakoid membrane. The catalysed reaction is a plastoquinone + NADH + (n+1) H(+)(in) = a plastoquinol + NAD(+) + n H(+)(out). It catalyses the reaction a plastoquinone + NADPH + (n+1) H(+)(in) = a plastoquinol + NADP(+) + n H(+)(out). In terms of biological role, NDH shuttles electrons from NAD(P)H:plastoquinone, via FMN and iron-sulfur (Fe-S) centers, to quinones in the photosynthetic chain and possibly in a chloroplast respiratory chain. The immediate electron acceptor for the enzyme in this species is believed to be plastoquinone. Couples the redox reaction to proton translocation, and thus conserves the redox energy in a proton gradient. This Zea mays (Maize) protein is NAD(P)H-quinone oxidoreductase subunit H, chloroplastic.